The following is a 360-amino-acid chain: Peptide chain release factor 1 (360 aa).

An N5-methylglutamine modification is found at Gln235. The disordered stretch occupies residues Ala284–Pro313.

Belongs to the prokaryotic/mitochondrial release factor family. In terms of processing, methylated by PrmC. Methylation increases the termination efficiency of RF1.

It localises to the cytoplasm. Peptide chain release factor 1 directs the termination of translation in response to the peptide chain termination codons UAG and UAA. The polypeptide is Peptide chain release factor 1 (Escherichia coli (strain UTI89 / UPEC)).